A 193-amino-acid polypeptide reads, in one-letter code: Potassium-transporting ATPase KdpC subunit (193 aa).

A helical transmembrane segment spans residues 14–34; the sequence is ITFTFLVLCGLVYPLIVTGIA.

Belongs to the KdpC family. As to quaternary structure, the system is composed of three essential subunits: KdpA, KdpB and KdpC.

It localises to the cell membrane. Part of the high-affinity ATP-driven potassium transport (or Kdp) system, which catalyzes the hydrolysis of ATP coupled with the electrogenic transport of potassium into the cytoplasm. This subunit acts as a catalytic chaperone that increases the ATP-binding affinity of the ATP-hydrolyzing subunit KdpB by the formation of a transient KdpB/KdpC/ATP ternary complex. The sequence is that of Potassium-transporting ATPase KdpC subunit from Bacillus cereus (strain ATCC 10987 / NRS 248).